The following is a 215-amino-acid chain: MSAPSPYVWTFQPQRGTAAGASQDYSTRINWLSAGPELRGKVVQLNEARNAILMKEQESVPTPRAEANPSFWPAALIFQPRPQAIPVHPAHPDTFDAALTSNGAQLAGGAWINYKNGSVRYEAPLQLAEEQVGGPLNAFAIKHQLQLAGGALSASMSEMSGAPRIPRSGGIGSWQFSREFPPTVYLNPFSGSPDTFPHQFLSNYDSFSHTVDGYD.

Thr-62 is modified (phosphothreonine; by host). A propeptide spanning residues 110–150 (AWINYKNGSVRYEAPLQLAEEQVGGPLNAFAIKHQLQLAGG) is cleaved from the precursor.

It belongs to the adenoviridae hexon-linking protein family. In terms of assembly, interacts with the peripentonal hexons as well as the hexons in the facets. Part of a complex composed of the core-capsid bridging protein, the endosome lysis protein VI and the hexon-linking protein VIII; these interactions bridge the virus core to the capsid. Post-translationally, cleaved by the viral protease during virion maturation. May cause the middle segment to be shed from the capsid.

The protein resides in the virion. It localises to the host nucleus. In terms of biological role, structural component of the virion that acts as a cement protein on the capsid interior and which glue the peripentonal hexons and group-of-nine hexons together. The protein is Pre-hexon-linking protein VIII of Murine adenovirus A serotype 1 (MAdV-1).